The primary structure comprises 621 residues: UvrABC system protein C (621 aa).

Residues 20–106 (TQSGIYQFFD…IKSLKPKYNI (87 aa)) enclose the GIY-YIG domain. In terms of domain architecture, UVR spans 212 to 247 (KALLKILESKMHTLSHNLQFEEAAIMRDRIQKITQM).

This sequence belongs to the UvrC family. Interacts with UvrB in an incision complex.

It is found in the cytoplasm. Functionally, the UvrABC repair system catalyzes the recognition and processing of DNA lesions. UvrC both incises the 5' and 3' sides of the lesion. The N-terminal half is responsible for the 3' incision and the C-terminal half is responsible for the 5' incision. The protein is UvrABC system protein C of Helicobacter hepaticus (strain ATCC 51449 / 3B1).